A 245-amino-acid chain; its full sequence is Probable ABC transporter ATP-binding protein p29 (245 aa).

The ABC transporter domain occupies 7 to 245 (LSFEKVSIIY…KEQLYKIYDN (239 aa)). 39-46 (GKSGVGKS) provides a ligand contact to ATP.

It belongs to the ABC transporter superfamily.

Part of a high-affinity transport system. This chain is Probable ABC transporter ATP-binding protein p29 (p29), found in Mycoplasma genitalium (strain ATCC 33530 / DSM 19775 / NCTC 10195 / G37) (Mycoplasmoides genitalium).